A 198-amino-acid polypeptide reads, in one-letter code: dTTP/UTP pyrophosphatase (198 aa).

Catalysis depends on Asp75, which acts as the Proton acceptor.

The protein belongs to the Maf family. YhdE subfamily. Requires a divalent metal cation as cofactor.

The protein resides in the cytoplasm. The catalysed reaction is dTTP + H2O = dTMP + diphosphate + H(+). It catalyses the reaction UTP + H2O = UMP + diphosphate + H(+). Functionally, nucleoside triphosphate pyrophosphatase that hydrolyzes dTTP and UTP. May have a dual role in cell division arrest and in preventing the incorporation of modified nucleotides into cellular nucleic acids. This chain is dTTP/UTP pyrophosphatase, found in Wolbachia pipientis wMel.